A 231-amino-acid chain; its full sequence is Endonuclease NucS (231 aa).

This sequence belongs to the NucS endonuclease family.

The protein resides in the cytoplasm. In terms of biological role, cleaves both 3' and 5' ssDNA extremities of branched DNA structures. This chain is Endonuclease NucS, found in Beutenbergia cavernae (strain ATCC BAA-8 / DSM 12333 / CCUG 43141 / JCM 11478 / NBRC 16432 / NCIMB 13614 / HKI 0122).